The primary structure comprises 47 residues: Conotoxin reg3.11 (47 aa).

The propeptide occupies 1–31; sequence DQPVERHAENKRHLIPAVMRAMTMNADRRVQ. Cystine bridges form between cysteine 32–cysteine 44, cysteine 33–cysteine 42, and cysteine 38–cysteine 45. Residues 46 to 47 constitute a propeptide that is removed on maturation; the sequence is YH.

Belongs to the conotoxin M superfamily. As to expression, expressed by the venom duct.

The protein resides in the secreted. In Conus regius (Crown cone), this protein is Conotoxin reg3.11.